Here is a 136-residue protein sequence, read N- to C-terminus: Salivary protein 15 Iric-2 (136 aa).

The N-terminal stretch at 1–22 (MESFVAMKVVCIVLLFVIAAEA) is a signal peptide. N105 is a glycosylation site (N-linked (GlcNAc...) asparagine). The interval 117–136 (GPKNQTCENKDQCVPHIPGC) is CD4-binding.

This sequence belongs to the salp15 family. As to quaternary structure, interacts with host CD4. Interacts with host DC-SIGN (CD209). Interacts with Borrelia outer surface protein C (OspC). Expressed in salivary glands. Detected in fed adult female.

It localises to the secreted. In terms of biological role, salivary tick protein that downregulates host immune system by binding to both dendritic cells, and CD4(+) T cells. Specifically binds to the CD4 coreceptor on T cells. This interaction prevents the activation of the Src kinase, Lck, and its downstream substrate Zap-70, and results in deficient activation of PLCgamma1, the repression of calcium fluxes triggered by T-cell antigen receptor (TCR) ligation, and a subsequent reduction in interleukin-2 production. This salivary protein also binds to DC-SIGN (CD209) on dendritic cells (DC) and activates the Raf-1 kinase/MEK signaling pathway that results in down-regulating expression of pro-inflammatory cytokines. Furthermore, it inhibits T cell proliferation induced by DCs. In addition, it inhibits in vitro keratinocyte inflammation induced by Borrelia burgdorferi or by the major outer surface protein (OspC) of Borrelia. In addition, it downregulates chemokines and monocyte chemoattractant protein 1, as well as several antimicrobial peptides such as defensins, cathelicidin, psoriasin, and RNase 7. Apart from its immunomodulatory activities, it is also associated with protection of Borrelia spirochetes from antibody-mediated killing through its binding to OspC. In vivo, tests on different immune disease animal models show promising therapeutic results, e.g., in inhibiting HIV infection, experimental autoimmune encephalomyelitis, transplantation rejection, and asthma. In Ixodes ricinus (Common tick), this protein is Salivary protein 15 Iric-2.